Reading from the N-terminus, the 445-residue chain is MKERKFFGTDGIRGKVGSGQMTPELALKLGWAAGRVLSRSGTKKVIIGKDTRISGYMFESALEAGLSAAGLNVMLMGPMPTPAVAYLTRTFRAEAGVVISASHNPYYDNGIKFFSTDGSKLDDNLELEIEAELEKPLVCVESHLLGKVSRIEDARGRYIEYCKGNFPAEHTLTGLKIVVDCAHGATYHIAPAVFRELGAEVIAIGDKPNGMNINDKVGATSMGKICETVIAESADLGIALDGDGDRIMMVNSKGEVIDGDQILYILACDAKSRGVLRGGVVGTLMSNLGLDLALQALDIPFARSKVGDRYVMELLKELDWRIGGENSGHILNLDHGTTGDGIVAGILVLAAMRRQNATLEELTSAMEMLPQVLVNVRFEGEHDPLKSDKVKAAQAQVESELGVRGRVLLRKSGTEPLIRVMVEGDDHSAVLAHANLIADAVKSAS.

The active-site Phosphoserine intermediate is the S102. Residues S102, D241, D243, and D245 each coordinate Mg(2+). S102 bears the Phosphoserine mark.

This sequence belongs to the phosphohexose mutase family. Requires Mg(2+) as cofactor. Post-translationally, activated by phosphorylation.

The enzyme catalyses alpha-D-glucosamine 1-phosphate = D-glucosamine 6-phosphate. Catalyzes the conversion of glucosamine-6-phosphate to glucosamine-1-phosphate. This is Phosphoglucosamine mutase from Shewanella baltica (strain OS155 / ATCC BAA-1091).